The primary structure comprises 483 residues: Cobyric acid synthase (483 aa).

A GATase cobBQ-type domain is found at 248–435; sequence VLKVVVPVLP…LHGLFETAAA (188 aa). Residue C329 is the Nucleophile of the active site. H427 is a catalytic residue.

Belongs to the CobB/CobQ family. CobQ subfamily.

It functions in the pathway cofactor biosynthesis; adenosylcobalamin biosynthesis. Functionally, catalyzes amidations at positions B, D, E, and G on adenosylcobyrinic A,C-diamide. NH(2) groups are provided by glutamine, and one molecule of ATP is hydrogenolyzed for each amidation. The sequence is that of Cobyric acid synthase from Pseudomonas fluorescens (strain SBW25).